The chain runs to 326 residues: Tagatose 1,6-diphosphate aldolase (326 aa).

This sequence belongs to the aldolase LacD family.

It carries out the reaction D-tagatofuranose 1,6-bisphosphate = D-glyceraldehyde 3-phosphate + dihydroxyacetone phosphate. The protein operates within carbohydrate metabolism; D-tagatose 6-phosphate degradation; D-glyceraldehyde 3-phosphate and glycerone phosphate from D-tagatose 6-phosphate: step 2/2. This is Tagatose 1,6-diphosphate aldolase from Staphylococcus aureus (strain bovine RF122 / ET3-1).